The sequence spans 658 residues: Squalene--hopene cyclase (658 aa).

A PFTB 1 repeat occupies 69-110 (EAKIGRYLRRIQGEHGGWSLFYGGDLDLSATVKAYFALKMIG). Catalysis depends on Asp392, which acts as the Proton donor. 3 PFTB repeats span residues 418–459 (KARA…GALL), 486–526 (MKAA…NVAA), and 534–584 (IQKA…GLMA).

The protein belongs to the terpene cyclase/mutase family.

It is found in the cell membrane. The enzyme catalyses squalene = hop-22(29)-ene. The catalysed reaction is squalene + H2O = hopan-22-ol. Its pathway is secondary metabolite biosynthesis; hopanoid biosynthesis. In terms of biological role, catalyzes the cyclization of squalene into hopene. The polypeptide is Squalene--hopene cyclase (shc) (Zymomonas mobilis subsp. mobilis (strain ATCC 31821 / ZM4 / CP4)).